Reading from the N-terminus, the 297-residue chain is Light-independent protochlorophyllide reductase iron-sulfur ATP-binding protein (297 aa).

ATP is bound by residues 41 to 46 (GIGKST) and lysine 70. Serine 45 is a binding site for Mg(2+). [4Fe-4S] cluster is bound by residues cysteine 126 and cysteine 160. ATP-binding positions include 211-212 (NR) and 235-237 (PDL).

This sequence belongs to the NifH/BchL/ChlL family. In terms of assembly, homodimer. Protochlorophyllide reductase is composed of three subunits; BchL, BchN and BchB. [4Fe-4S] cluster serves as cofactor.

The catalysed reaction is chlorophyllide a + oxidized 2[4Fe-4S]-[ferredoxin] + 2 ADP + 2 phosphate = protochlorophyllide a + reduced 2[4Fe-4S]-[ferredoxin] + 2 ATP + 2 H2O. Its pathway is porphyrin-containing compound metabolism; bacteriochlorophyll biosynthesis (light-independent). In terms of biological role, component of the dark-operative protochlorophyllide reductase (DPOR) that uses Mg-ATP and reduced ferredoxin to reduce ring D of protochlorophyllide (Pchlide) to form chlorophyllide a (Chlide). This reaction is light-independent. The L component serves as a unique electron donor to the NB-component of the complex, and binds Mg-ATP. In Methylorubrum populi (strain ATCC BAA-705 / NCIMB 13946 / BJ001) (Methylobacterium populi), this protein is Light-independent protochlorophyllide reductase iron-sulfur ATP-binding protein.